Reading from the N-terminus, the 130-residue chain is Small ribosomal subunit protein uS11 (130 aa).

It belongs to the universal ribosomal protein uS11 family. As to quaternary structure, part of the 30S ribosomal subunit. Interacts with proteins S7 and S18. Binds to IF-3.

Functionally, located on the platform of the 30S subunit, it bridges several disparate RNA helices of the 16S rRNA. Forms part of the Shine-Dalgarno cleft in the 70S ribosome. In Gloeothece citriformis (strain PCC 7424) (Cyanothece sp. (strain PCC 7424)), this protein is Small ribosomal subunit protein uS11.